Here is a 273-residue protein sequence, read N- to C-terminus: Thiazole synthase (273 aa).

Lysine 110 (schiff-base intermediate with DXP) is an active-site residue. 1-deoxy-D-xylulose 5-phosphate is bound by residues glycine 171, 197 to 198 (AG), and 219 to 220 (NT). The tract at residues 251-273 (MAAQDSAQPSTPVLGTPFWHHAP) is disordered.

The protein belongs to the ThiG family. In terms of assembly, homotetramer. Forms heterodimers with either ThiH or ThiS.

The protein localises to the cytoplasm. The catalysed reaction is [ThiS sulfur-carrier protein]-C-terminal-Gly-aminoethanethioate + 2-iminoacetate + 1-deoxy-D-xylulose 5-phosphate = [ThiS sulfur-carrier protein]-C-terminal Gly-Gly + 2-[(2R,5Z)-2-carboxy-4-methylthiazol-5(2H)-ylidene]ethyl phosphate + 2 H2O + H(+). Its pathway is cofactor biosynthesis; thiamine diphosphate biosynthesis. Its function is as follows. Catalyzes the rearrangement of 1-deoxy-D-xylulose 5-phosphate (DXP) to produce the thiazole phosphate moiety of thiamine. Sulfur is provided by the thiocarboxylate moiety of the carrier protein ThiS. In vitro, sulfur can be provided by H(2)S. The polypeptide is Thiazole synthase (Variovorax paradoxus (strain S110)).